The primary structure comprises 379 residues: Small ribosomal subunit protein uS2cy (379 aa).

The tract at residues 1–94 (MKLVQFFEIG…MGTSSNRAKS (94 aa)) is N-terminal extension. Residues 83–106 (NQMGTSSNRAKSTDTPAVSTSQNV) are disordered.

The protein belongs to the universal ribosomal protein uS2 family.

The protein localises to the plastid. The protein resides in the chloroplast. In Tetradesmus obliquus (Green alga), this protein is Small ribosomal subunit protein uS2cy (rps2-2).